A 419-amino-acid polypeptide reads, in one-letter code: Tyrosine--tRNA ligase (419 aa).

An L-tyrosine-binding site is contributed by Tyr-34. Residues Pro-39–Asn-48 carry the 'HIGH' region motif. L-tyrosine is bound by residues Tyr-169 and Gln-173. The 'KMSKS' region motif lies at Lys-230 to Thr-234. Residue Lys-233 participates in ATP binding. The S4 RNA-binding domain maps to Val-352 to Ala-419.

This sequence belongs to the class-I aminoacyl-tRNA synthetase family. TyrS type 1 subfamily. In terms of assembly, homodimer.

The protein resides in the cytoplasm. It carries out the reaction tRNA(Tyr) + L-tyrosine + ATP = L-tyrosyl-tRNA(Tyr) + AMP + diphosphate + H(+). Its function is as follows. Catalyzes the attachment of tyrosine to tRNA(Tyr) in a two-step reaction: tyrosine is first activated by ATP to form Tyr-AMP and then transferred to the acceptor end of tRNA(Tyr). In Geobacillus kaustophilus (strain HTA426), this protein is Tyrosine--tRNA ligase.